Consider the following 78-residue polypeptide: Large ribosomal subunit protein eL38 (78 aa).

The protein belongs to the eukaryotic ribosomal protein eL38 family. As to quaternary structure, component of the large ribosomal subunit. Mature ribosomes consist of a small (40S) and a large (60S) subunit. The 40S subunit contains about 32 different proteins and 1 molecule of RNA (18S). The 60S subunit contains 45 different proteins and 3 molecules of RNA (25S, 5.8S and 5S).

The protein localises to the cytoplasm. In terms of biological role, component of the ribosome, a large ribonucleoprotein complex responsible for the synthesis of proteins in the cell. The small ribosomal subunit (SSU) binds messenger RNAs (mRNAs) and translates the encoded message by selecting cognate aminoacyl-transfer RNA (tRNA) molecules. The large subunit (LSU) contains the ribosomal catalytic site termed the peptidyl transferase center (PTC), which catalyzes the formation of peptide bonds, thereby polymerizing the amino acids delivered by tRNAs into a polypeptide chain. The nascent polypeptides leave the ribosome through a tunnel in the LSU and interact with protein factors that function in enzymatic processing, targeting, and the membrane insertion of nascent chains at the exit of the ribosomal tunnel. The polypeptide is Large ribosomal subunit protein eL38 (Candida albicans (strain SC5314 / ATCC MYA-2876) (Yeast)).